A 139-amino-acid chain; its full sequence is Large-conductance mechanosensitive channel (139 aa).

2 helical membrane passes run 9 to 29 and 79 to 99; these read AFAV…GAAF and IQTV…VKAI.

Belongs to the MscL family. As to quaternary structure, homopentamer.

The protein resides in the cell inner membrane. Its function is as follows. Channel that opens in response to stretch forces in the membrane lipid bilayer. May participate in the regulation of osmotic pressure changes within the cell. The chain is Large-conductance mechanosensitive channel from Pseudomonas putida (strain ATCC 47054 / DSM 6125 / CFBP 8728 / NCIMB 11950 / KT2440).